The sequence spans 418 residues: Thyroid hormone receptor alpha (418 aa).

The disordered stretch occupies residues 1-41; the sequence is MDQNLSGLDCLSEPDEKRWPDGKRKRKNSQCMGKSGMSGDS. Positions 1 to 60 are modulating; sequence MDQNLSGLDCLSEPDEKRWPDGKRKRKNSQCMGKSGMSGDSSVSLLSAGYIPSYLTKDEP. The Zn(2+) site is built by cysteine 61, cysteine 64, cysteine 78, cysteine 81, cysteine 99, cysteine 105, cysteine 115, and cysteine 118. NR C4-type zinc fingers lie at residues 61–81 and 99–123; these read CVVCSDKATGYHYRCITCEGC and CKYDGCCIIDKITRNQCQLCRFKKC. The segment at residues 61–135 is a DNA-binding region (nuclear receptor); it reads CVVCSDKATG…VGMAMDLVLD (75 aa). An NR LBD domain is found at 171–415; it reads EEWELIRIVT…PPLFLEVFED (245 aa). Residues arginine 236 and serine 285 each contribute to the 3,3',5-triiodo-L-thyronine site.

The protein belongs to the nuclear hormone receptor family. NR1 subfamily. As to expression, highest level of expression in erythrocytes. Also expressed in liver, tail, eye, muscle and skin.

Its subcellular location is the nucleus. Nuclear hormone receptor that can act as a repressor or activator of transcription. High affinity receptor for thyroid hormones, including triiodothyronine and thyroxine. The protein is Thyroid hormone receptor alpha (thra) of Aquarana catesbeiana (American bullfrog).